The chain runs to 122 residues: Large ribosomal subunit protein eL34 (122 aa).

It belongs to the eukaryotic ribosomal protein eL34 family. Component of the large ribosomal subunit. Mature ribosomes consist of a small (40S) and a large (60S) subunit. The 40S subunit contains about 32 different proteins and 1 molecule of RNA (18S). The 60S subunit contains 45 different proteins and 3 molecules of RNA (25S, 5.8S and 5S).

It localises to the cytoplasm. Its function is as follows. Component of the ribosome, a large ribonucleoprotein complex responsible for the synthesis of proteins in the cell. The small ribosomal subunit (SSU) binds messenger RNAs (mRNAs) and translates the encoded message by selecting cognate aminoacyl-transfer RNA (tRNA) molecules. The large subunit (LSU) contains the ribosomal catalytic site termed the peptidyl transferase center (PTC), which catalyzes the formation of peptide bonds, thereby polymerizing the amino acids delivered by tRNAs into a polypeptide chain. The nascent polypeptides leave the ribosome through a tunnel in the LSU and interact with protein factors that function in enzymatic processing, targeting, and the membrane insertion of nascent chains at the exit of the ribosomal tunnel. This Candida albicans (strain SC5314 / ATCC MYA-2876) (Yeast) protein is Large ribosomal subunit protein eL34.